Here is a 148-residue protein sequence, read N- to C-terminus: Lysozyme C (148 aa).

An N-terminal signal peptide occupies residues M1–G18. The C-type lysozyme domain occupies K19 to V148. 4 disulfides stabilise this stretch: C24-C146, C48-C134, C83-C99, and C95-C113. Catalysis depends on residues E53 and D71.

This sequence belongs to the glycosyl hydrolase 22 family. In terms of assembly, monomer.

Its subcellular location is the secreted. It carries out the reaction Hydrolysis of (1-&gt;4)-beta-linkages between N-acetylmuramic acid and N-acetyl-D-glucosamine residues in a peptidoglycan and between N-acetyl-D-glucosamine residues in chitodextrins.. Lysozymes have primarily a bacteriolytic function; those in tissues and body fluids are associated with the monocyte-macrophage system and enhance the activity of immunoagents. This Saguinus oedipus (Cotton-top tamarin) protein is Lysozyme C (LYZ).